The primary structure comprises 376 residues: N-acetyldiaminopimelate deacetylase (376 aa).

Residue Asp70 is part of the active site. The Proton acceptor role is filled by Glu129.

The protein belongs to the peptidase M20A family. N-acetyldiaminopimelate deacetylase subfamily.

The enzyme catalyses N-acetyl-(2S,6S)-2,6-diaminopimelate + H2O = (2S,6S)-2,6-diaminopimelate + acetate. The protein operates within amino-acid biosynthesis; L-lysine biosynthesis via DAP pathway; LL-2,6-diaminopimelate from (S)-tetrahydrodipicolinate (acetylase route): step 3/3. Functionally, catalyzes the conversion of N-acetyl-diaminopimelate to diaminopimelate and acetate. This chain is N-acetyldiaminopimelate deacetylase, found in Bacillus pumilus (strain SAFR-032).